Reading from the N-terminus, the 305-residue chain is MTQRRAMLILHGKQALNEDVRDAVADKRKQGWELDVRLTWEAGDAQRLVSEALAAGHRHIVAGGGDGTLRDIAEALALAETSASLTILPLGTANDFARAAGVPLEVSKALQLMDVAPRAVDLGEVGGKLFLNMATGGFGSQVTANTSEDLKKVLGGAAYLFTGLTRFSELHSAHGELTGPDFHWRGDLLALGIGNGRQAGGGHELCPTALADDGLLDISILPAPQEVVGTLRSLLEGGLGIDNMFIRARLPWVELKSTQGLDINLDGEPLSGEDLRFEARPGALHVHLPADSPLLGGAPKLNRPD.

The 129-residue stretch at 1-129 folds into the DAGKc domain; it reads MTQRRAMLIL…VDLGEVGGKL (129 aa). Residues Thr-39, 65–71, and Thr-92 contribute to the ATP site; that span reads GDGTLRD. Mg(2+) contacts are provided by Leu-210, Asp-213, and Leu-215. Glu-268 functions as the Proton acceptor in the catalytic mechanism.

Belongs to the diacylglycerol/lipid kinase family. YegS lipid kinase subfamily. Mg(2+) serves as cofactor. It depends on Ca(2+) as a cofactor.

The protein localises to the cytoplasm. In terms of biological role, probably phosphorylates lipids; the in vivo substrate is unknown. In Pseudomonas syringae pv. syringae (strain B728a), this protein is Probable lipid kinase YegS-like.